A 130-amino-acid polypeptide reads, in one-letter code: Phosphomevalonate dehydratase small subunit (130 aa).

Serine 62 functions as the Proton acceptor in the catalytic mechanism.

This sequence belongs to the AcnX type II small subunit family. In terms of assembly, heterodimer composed of a large subunit (PMDh-L) and a small subunit (PMDh-S).

It carries out the reaction (R)-5-phosphomevalonate = (2E)-3-methyl-5-phosphooxypent-2-enoate + H2O. It functions in the pathway isoprenoid biosynthesis; isopentenyl diphosphate biosynthesis via mevalonate pathway. Component of a hydro-lyase that catalyzes the dehydration of mevalonate 5-phosphate (MVA5P) to form trans-anhydromevalonate 5-phosphate (tAHMP). Involved in the archaeal mevalonate (MVA) pathway, which provides fundamental precursors for isoprenoid biosynthesis, such as isopentenyl diphosphate (IPP) and dimethylallyl diphosphate (DMAPP). This is Phosphomevalonate dehydratase small subunit from Pyrococcus abyssi (strain GE5 / Orsay).